The sequence spans 825 residues: Phenylalanine--tRNA ligase beta subunit (825 aa).

Positions 39–154 (RSWAEGVVLG…KAHPLGSDAR (116 aa)) constitute a tRNA-binding domain. Residues 411 to 506 (PLERTLKLRL…RLYGYDRFSE (96 aa)) form the B5 domain. Residues Asp-484, Asp-490, Glu-493, and Glu-494 each contribute to the Mg(2+) site. Positions 731-824 (SPFPASDRDI…LEKHFPVTLR (94 aa)) constitute an FDX-ACB domain.

Belongs to the phenylalanyl-tRNA synthetase beta subunit family. Type 1 subfamily. Tetramer of two alpha and two beta subunits. The cofactor is Mg(2+).

The protein localises to the cytoplasm. The catalysed reaction is tRNA(Phe) + L-phenylalanine + ATP = L-phenylalanyl-tRNA(Phe) + AMP + diphosphate + H(+). The polypeptide is Phenylalanine--tRNA ligase beta subunit (Synechococcus sp. (strain JA-3-3Ab) (Cyanobacteria bacterium Yellowstone A-Prime)).